The sequence spans 394 residues: Elongation factor Tu (394 aa).

In terms of domain architecture, tr-type G spans 10–204; it reads KPHVNIGTIG…AVDSYIPQPV (195 aa). The tract at residues 19 to 26 is G1; sequence GHVDHGKT. 19–26 provides a ligand contact to GTP; it reads GHVDHGKT. Threonine 26 contributes to the Mg(2+) binding site. The tract at residues 60-64 is G2; it reads GITIS. The G3 stretch occupies residues 81-84; the sequence is DCPG. Residues 81–85 and 136–139 each bind GTP; these read DCPGH and NKVD. Residues 136–139 form a G4 region; that stretch reads NKVD. Positions 174–176 are G5; that stretch reads SAL.

The protein belongs to the TRAFAC class translation factor GTPase superfamily. Classic translation factor GTPase family. EF-Tu/EF-1A subfamily. In terms of assembly, monomer.

Its subcellular location is the cytoplasm. The enzyme catalyses GTP + H2O = GDP + phosphate + H(+). Functionally, GTP hydrolase that promotes the GTP-dependent binding of aminoacyl-tRNA to the A-site of ribosomes during protein biosynthesis. The polypeptide is Elongation factor Tu (Rickettsia montanensis).